The chain runs to 157 residues: MNILMLTFIICGLLTQVTKGSFEPQKCWKNNIGHCRRRCLDTERCILLCRNKLSCCIYIIISHEYTQRPAFPMIHLEDITFDYSDVDSFTGSPVSMLNDLITFDTTKFGETMTPETNTPETTVPPSETTTPETTMPPSETATSETMPPPSQTALTHN.

An N-terminal signal peptide occupies residues 1 to 20 (MNILMLTFIICGLLTQVTKG). Cystine bridges form between cysteine 27–cysteine 55, cysteine 35–cysteine 49, and cysteine 39–cysteine 56. The disordered stretch occupies residues 109–157 (GETMTPETNTPETTVPPSETTTPETTMPPSETATSETMPPPSQTALTHN). The segment covering 110 to 145 (ETMTPETNTPETTVPPSETTTPETTMPPSETATSET) has biased composition (low complexity).

Belongs to the beta-defensin family.

The protein resides in the secreted. Functionally, has antibacterial activity. This chain is Beta-defensin 125 (DEFB125), found in Gorilla gorilla gorilla (Western lowland gorilla).